We begin with the raw amino-acid sequence, 437 residues long: Phosphomethylpyrimidine synthase (437 aa).

Substrate is bound by residues Asn-69, Met-98, Tyr-127, His-163, 185–187 (SRG), 226–229 (DACR), and Glu-265. Zn(2+) is bound at residue His-269. Tyr-292 contacts substrate. His-333 lines the Zn(2+) pocket. Positions 409, 412, and 416 each coordinate [4Fe-4S] cluster.

The protein belongs to the ThiC family. [4Fe-4S] cluster is required as a cofactor.

It catalyses the reaction 5-amino-1-(5-phospho-beta-D-ribosyl)imidazole + S-adenosyl-L-methionine = 4-amino-2-methyl-5-(phosphooxymethyl)pyrimidine + CO + 5'-deoxyadenosine + formate + L-methionine + 3 H(+). It participates in cofactor biosynthesis; thiamine diphosphate biosynthesis. Its function is as follows. Catalyzes the synthesis of the hydroxymethylpyrimidine phosphate (HMP-P) moiety of thiamine from aminoimidazole ribotide (AIR) in a radical S-adenosyl-L-methionine (SAM)-dependent reaction. The sequence is that of Phosphomethylpyrimidine synthase from Alkaliphilus metalliredigens (strain QYMF).